The chain runs to 69 residues: Large ribosomal subunit protein uL29 (69 aa).

Belongs to the universal ribosomal protein uL29 family.

The polypeptide is Large ribosomal subunit protein uL29 (Lachnoclostridium phytofermentans (strain ATCC 700394 / DSM 18823 / ISDg) (Clostridium phytofermentans)).